The chain runs to 131 residues: C-glycoside deglycosidase beta subunit (131 aa).

This sequence belongs to the C-glycoside deglycosidase beta subunit family. In terms of assembly, heterodimer composed of an alpha subunit (CarB1) and a beta subunit (CarC1). Mg(2+) serves as cofactor.

The catalysed reaction is 3''-dehydroisovitexin = 1,5-anhydro-D-erythro-hex-1-en-3-ulose + apigenin. With respect to regulation, activity is strongly reduced in the presence of chelating agents. Carbon-carbon bond-cleaving enzyme which participates in the metabolism of C-glycosides. Acts on the C6-glycosylated compound 3''-dehydroisovitexin (3''-oxo-isovitexin). Shows weak activity with 3''-dehydroisoorientin (3''-oxo-homoorientin) and 3'-dehydromangiferin (3'-oxo-mangiferin). The chain is C-glycoside deglycosidase beta subunit from Arthrobacter globiformis (strain ATCC 8010 / DSM 20124 / JCM 1332 / NBRC 12137 / NCIMB 8907 / NRRL B-2979 / 168).